The primary structure comprises 575 residues: Glutathione hydrolase proenzyme (575 aa).

An N-terminal signal peptide occupies residues 1–24 (MKNQTFSKALLATALSCALFNVHA). L-glutamate is bound at residue R100. T376 functions as the Nucleophile in the catalytic mechanism. L-glutamate-binding positions include T394, N396, E415, D418, 447 to 448 (SS), and 468 to 469 (GG).

It belongs to the gamma-glutamyltransferase family. As to quaternary structure, this enzyme consists of two polypeptide chains, which are synthesized in precursor form from a single polypeptide. In terms of processing, cleaved by autocatalysis into a large and a small subunit.

The protein resides in the periplasm. The catalysed reaction is an N-terminal (5-L-glutamyl)-[peptide] + an alpha-amino acid = 5-L-glutamyl amino acid + an N-terminal L-alpha-aminoacyl-[peptide]. The enzyme catalyses glutathione + H2O = L-cysteinylglycine + L-glutamate. It carries out the reaction an S-substituted glutathione + H2O = an S-substituted L-cysteinylglycine + L-glutamate. The protein operates within sulfur metabolism; glutathione metabolism. The sequence is that of Glutathione hydrolase proenzyme (ggt) from Pseudomonas sp. (strain A14).